The following is a 365-amino-acid chain: MTNISAEKRILIMAGGTGGHVFPALAVAKYLSQKSWKVRWLGTAERMEARLVPQHGFDIDFIDIKGVRGNGLLRKLAAPFKVMRSVMQARRVIQEFKPDVVLGMGGFASGPGGIAARLSGIPLVLHEQNAIPGMTNKLLSRIASKVLCAFEDTFDNIPAQVVGNPIRKELIALGQSTETDCVEDALKVLVVGGSLGAKVFNDLMPGVTDAVSKTHSITVWHQVGKGNLASVKGDYQHLGQDGSVIVAEFIDDMEAAYSWADVVLCRAGALTVSELAAVGLPSILVPYPHAVDDHQTKNAQVLVNAGGAFLLPQTILDADKLISKLQILASDRAELCHMGERAKDVAIIDATEKVADVCIELAQKD.

UDP-N-acetyl-alpha-D-glucosamine contacts are provided by residues 17–19 (TGG), Asn129, Arg167, Ser194, Ile250, 269–274 (ALTVSE), and Gln295.

The protein belongs to the glycosyltransferase 28 family. MurG subfamily.

It localises to the cell inner membrane. The catalysed reaction is di-trans,octa-cis-undecaprenyl diphospho-N-acetyl-alpha-D-muramoyl-L-alanyl-D-glutamyl-meso-2,6-diaminopimeloyl-D-alanyl-D-alanine + UDP-N-acetyl-alpha-D-glucosamine = di-trans,octa-cis-undecaprenyl diphospho-[N-acetyl-alpha-D-glucosaminyl-(1-&gt;4)]-N-acetyl-alpha-D-muramoyl-L-alanyl-D-glutamyl-meso-2,6-diaminopimeloyl-D-alanyl-D-alanine + UDP + H(+). The protein operates within cell wall biogenesis; peptidoglycan biosynthesis. In terms of biological role, cell wall formation. Catalyzes the transfer of a GlcNAc subunit on undecaprenyl-pyrophosphoryl-MurNAc-pentapeptide (lipid intermediate I) to form undecaprenyl-pyrophosphoryl-MurNAc-(pentapeptide)GlcNAc (lipid intermediate II). The protein is UDP-N-acetylglucosamine--N-acetylmuramyl-(pentapeptide) pyrophosphoryl-undecaprenol N-acetylglucosamine transferase of Shewanella violacea (strain JCM 10179 / CIP 106290 / LMG 19151 / DSS12).